Consider the following 422-residue polypeptide: Solute carrier family 35 member D3 (422 aa).

The next 10 membrane-spanning stretches (helical) occupy residues 9-29, 38-58, 64-84, 103-123, 131-151, 155-175, 187-207, 224-244, 257-277, and 280-300; these read VLGI…NILL, FSFL…SLEL, LIAV…VAVL, MYVV…VLVL, GVLA…AGDL, PIGY…LVLI, LTAQ…CSFA, AMVS…FTTL, FVGV…FSDV, and TSLF…YCVA. The segment at 339-365 is disordered; the sequence is AKSGNSEPESAEGAGDSVQQGGQESRG. The span at 355 to 364 shows a compositional bias: polar residues; sequence SVQQGGQESR.

Belongs to the TPT transporter family. SLC35D subfamily. In terms of assembly, could interact with ATG14, BECN1 and PIK3C3 that form the PI3KC3-C1/AIC/autophagy initiation complex; enhancing the formation of the AIC and promoting autophagy. Expressed in brain. Expressed in subsets of dopaminergic neurons. Expressed in maturing megakaryocytes.

It is found in the cytoplasmic vesicle. The protein localises to the secretory vesicle. It localises to the synaptic vesicle membrane. Its subcellular location is the early endosome membrane. The protein resides in the endoplasmic reticulum membrane. The catalysed reaction is UDP-alpha-D-glucose(in) = UDP-alpha-D-glucose(out). Inhibited by proton uncouplers that directly abolish the proton electrochemical gradient. Its function is as follows. Probable UDP-glucose transmembrane transporter involved in UDP-glucose transport from the cytosol to the lumen of synaptic vesicles. It is involved in platelet dense granules maturation. In terms of biological role, alternatively, could function as a molecular adapter enhancing the formation of the PI3KC3-C1/AIC/autophagy initiation complex to promote autophagy in dopaminergic neurons. Could also regulate the plasma membrane localization of the D(1A) dopamine receptor/DRD1 and dopamine signaling. The chain is Solute carrier family 35 member D3 from Mus musculus (Mouse).